The sequence spans 265 residues: Short-chain dehydrogenase/reductase GME11373 (265 aa).

Residues Ile-26, Asp-72, Asn-99, and Arg-132 each contribute to the NADP(+) site. Catalysis depends on proton donor residues Ser-148 and Ser-149. NADP(+)-binding residues include Tyr-163, Lys-167, and Thr-198. Residue Tyr-163 is the Proton acceptor of the active site. The active-site Lowers pKa of active site Tyr is Lys-167.

The protein belongs to the short-chain dehydrogenases/reductases (SDR) family.

It functions in the pathway secondary metabolite biosynthesis. Short-chain dehydrogenase/reductase; part of the gene cluster that mediates the biosynthesis of dibenzodioxocinones such as pestalotiollide B, a novel class of inhibitors against cholesterol ester transfer protein (CEPT). The biosynthesis initiates from condensation of acetate and malonate units catalyzed by the non-reducing PKS pks8/GME11356. Pks8/GME11356 lacks a thioesterase (TE) domain, which is important to the cyclizing of the third ring of atrochrysone carboxylic acid, and the esterase GME11355 might play the role of TE and catalyzes the cyclization reaction of the C ring. The lactamase-like protein GME11357 (or other beta-lactamases in Pestalotiopsis microspora) probably hydrolyzes the thioester bond between the ACP of pks8/GME11356 and the intermediate to release atrochrysone carboxylic acid, which is spontaneously dehydrates to form endocrocin anthrone. Endocrocin anthrone is further converted to emodin via the endocrocin intermediate. Emodin is then oxidized by several enzymes such as the Baeyer-Villiger oxidase GME11358, the oxidoreductase GME11367, the short chain dehydrogenase/reductase GME11373, as well as by other oxidoreductases from the cluster, to modify the A and C rings and open the B ring, and finally yield monodictyphenone. The prenyltransferase GME11375 may catalyze the addition reaction between the C5 side chains and the carbon bone of dibenzodioxocinones. The remaining biochemical reactions to the final product dibenzodioxocinones should be methylation catalyzed by methyltransferase GME11366 and reduction and lactonization reaction catalyzed by a series of oxidordeuctases. The chain is Short-chain dehydrogenase/reductase GME11373 from Pestalotiopsis microspora.